Here is a 601-residue protein sequence, read N- to C-terminus: MPESNAHIRNFSIIAHIDHGKSTLADRLLEHTGTVSERHAQAQFLDNMELERERGITIKAQTVRMRYRARDGVDYELNLIDTPGHVDFAYEVSRSLAACEGAILVVDATQGVEAQTLANVYQALDHDLEIIPVINKVDLPSADVPGVRAEIEEVIGLDASEAVPASAKEGIGIGDILEQIVRKVPPPKGDPEAPLKAIIFDSWYDSYRGVVMLVRVFEGTLAPKQKIQLVSNRKKFEVQELGIFAPFAKPVQRLTAGEVGIVVANVKEVQDAKVGDTVTEADRPTEDPFPGFKVVKPMVFSGVFPIEAKDYEQLRDALEKLRLNDSAFTFEPETSTALGFGFRCGYLGLLHMEIVQERLEREYNLSLITTAPSVVYRVTDTQGEVVEIDNPAKLPPVQRIAKLEEPHLTCHIHARTDDVGAILQLCQDRRGVQRDLKYLGTKRVQITYDIPLAEVVFDFFDKLKSVSRGYASLDYELKGYEEADLVKLDILINGEPVDALSVIVHRERAYHRGRELCQKLREVIPKQMYEVAIQAAIGAKIIARETVKAFRKDVIAKCYGGDISRKRKLLERQKEGKKRMKQVGSVEIPQEAFLAVLKVEE.

The region spanning alanine 6 to lysine 188 is the tr-type G domain. GTP is bound by residues aspartate 18–threonine 23 and asparagine 135–aspartate 138.

It belongs to the TRAFAC class translation factor GTPase superfamily. Classic translation factor GTPase family. LepA subfamily.

It is found in the cell inner membrane. It catalyses the reaction GTP + H2O = GDP + phosphate + H(+). Its function is as follows. Required for accurate and efficient protein synthesis under certain stress conditions. May act as a fidelity factor of the translation reaction, by catalyzing a one-codon backward translocation of tRNAs on improperly translocated ribosomes. Back-translocation proceeds from a post-translocation (POST) complex to a pre-translocation (PRE) complex, thus giving elongation factor G a second chance to translocate the tRNAs correctly. Binds to ribosomes in a GTP-dependent manner. The protein is Elongation factor 4 of Anaeromyxobacter sp. (strain Fw109-5).